We begin with the raw amino-acid sequence, 356 residues long: MQTLHALLRDIPAPDAEAMARAQQHIDGLLKPPGSLGRLETLAVQLAGMPGLNGTPQVDEKAVLVMCADHGVWDEGVAVSPKIVTAIQAANMTRGTTGVCVLAAQAGAKVHVIDVGIDAEPIPGVVNMRVARGCGNIAVGPAMSRLQAEALLLEVSRYTCDLAQRGVTLFGVGELGMANTTPAAAMVSVFTGSDAKEVVGIGANLPPSRIDNKVDVVRRAIAINQPNPRDGIDVLSKVGGFDLVGMTGVMLGAARCGLPVLLDGFLSYSAALAACQIAPAVRLYLIPSHFSAEKGARIALAHLSMDPYLHMAMRLGEGSGAALAMPIVEAACAMFHNMGELAASNIVLPEGNANAT.

Glutamate 317 serves as the catalytic Proton acceptor.

It belongs to the CobT family. Homodimer.

The enzyme catalyses 5,6-dimethylbenzimidazole + nicotinate beta-D-ribonucleotide = alpha-ribazole 5'-phosphate + nicotinate + H(+). It participates in nucleoside biosynthesis; alpha-ribazole biosynthesis; alpha-ribazole from 5,6-dimethylbenzimidazole: step 1/2. Catalyzes the synthesis of alpha-ribazole-5'-phosphate from nicotinate mononucleotide (NAMN) and 5,6-dimethylbenzimidazole (DMB). The polypeptide is Nicotinate-nucleotide--dimethylbenzimidazole phosphoribosyltransferase (Salmonella gallinarum (strain 287/91 / NCTC 13346)).